A 94-amino-acid polypeptide reads, in one-letter code: Co-chaperonin GroES (94 aa).

The protein belongs to the GroES chaperonin family. As to quaternary structure, heptamer of 7 subunits arranged in a ring. Interacts with the chaperonin GroEL.

The protein resides in the cytoplasm. In terms of biological role, together with the chaperonin GroEL, plays an essential role in assisting protein folding. The GroEL-GroES system forms a nano-cage that allows encapsulation of the non-native substrate proteins and provides a physical environment optimized to promote and accelerate protein folding. GroES binds to the apical surface of the GroEL ring, thereby capping the opening of the GroEL channel. This chain is Co-chaperonin GroES, found in Streptococcus pneumoniae (strain ATCC 700669 / Spain 23F-1).